The sequence spans 274 residues: Putative hydro-lyase Veis_4744 (274 aa).

Belongs to the D-glutamate cyclase family.

The sequence is that of Putative hydro-lyase Veis_4744 from Verminephrobacter eiseniae (strain EF01-2).